Here is a 180-residue protein sequence, read N- to C-terminus: ATP-dependent protease subunit HslV (180 aa).

The active site involves T7. 3 residues coordinate Na(+): A164, C167, and T170.

The protein belongs to the peptidase T1B family. HslV subfamily. In terms of assembly, a double ring-shaped homohexamer of HslV is capped on each side by a ring-shaped HslU homohexamer. The assembly of the HslU/HslV complex is dependent on binding of ATP.

It is found in the cytoplasm. It carries out the reaction ATP-dependent cleavage of peptide bonds with broad specificity.. Its activity is regulated as follows. Allosterically activated by HslU binding. Its function is as follows. Protease subunit of a proteasome-like degradation complex believed to be a general protein degrading machinery. This chain is ATP-dependent protease subunit HslV, found in Brevibacillus brevis (strain 47 / JCM 6285 / NBRC 100599).